We begin with the raw amino-acid sequence, 572 residues long: FAD-linked oxidoreductase patO (572 aa).

A signal peptide spans 1–23 (MRLSIYSSILLLRAMCLVRPTFG). 10 N-linked (GlcNAc...) asparagine glycosylation sites follow: asparagine 48, asparagine 71, asparagine 126, asparagine 180, asparagine 309, asparagine 354, asparagine 381, asparagine 422, asparagine 446, and asparagine 481. An FAD-binding PCMH-type domain is found at 115–295 (CAPGDMVVYS…YSMTVKAFPD (181 aa)).

This sequence belongs to the oxygen-dependent FAD-linked oxidoreductase family. The cofactor is FAD.

It localises to the vacuole lumen. The protein operates within mycotoxin biosynthesis; patulin biosynthesis. FAD-linked oxidoreductase; part of the gene cluster that mediates the biosynthesis of patulin, an acetate-derived tetraketide mycotoxin produced by several fungal species that shows antimicrobial properties against several bacteria. PatO acts with patJ in the vacuole to convert gentisyl alcohol to isoepoxydon. The pathway begins with the synthesis of 6-methylsalicylic acid by the polyketide synthase (PKS) patK via condensation of acetate and malonate units. The 6-methylsalicylic acid decarboxylase patG then catalyzes the decarboxylation of 6-methylsalicylic acid to yield m-cresol (also known as 3-methylphenol). These first reactions occur in the cytosol. The intermediate m-cresol is then transported into the endoplasmic reticulum where the cytochrome P450 monooxygenase patH converts it to m-hydroxybenzyl alcohol, which is further converted to gentisyl alcohol by the cytochrome P450 monooxygenase patI. The oxidoreductases patJ and patO further convert gentisyl alcohol to isoepoxydon in the vacuole. PatN catalyzes then the transformation of isoepoxydon into phyllostine. The cluster protein patF is responsible for the conversion from phyllostine to neopatulin whereas the alcohol dehydrogenase patD converts neopatulin to E-ascladiol. The steps between isoepoxydon and E-ascladiol occur in the cytosol, and E-ascladiol is probably secreted to the extracellular space by one of the cluster-specific transporters patC or patM. Finally, the secreted patulin synthase patE catalyzes the conversion of E-ascladiol to patulin. This is FAD-linked oxidoreductase patO from Aspergillus clavatus (strain ATCC 1007 / CBS 513.65 / DSM 816 / NCTC 3887 / NRRL 1 / QM 1276 / 107).